Here is a 139-residue protein sequence, read N- to C-terminus: Small ribosomal subunit protein uS12m (139 aa).

The N-terminal 29 residues, 1–29 (MSWSGPLRGLNTSLTCGPALVPRLWATCS), are a transit peptide targeting the mitochondrion. Residues 36 to 56 (MHRLGGPPKRPPQKLGPTEGR) are disordered.

This sequence belongs to the universal ribosomal protein uS12 family. Component of the mitochondrial ribosome small subunit (28S) which comprises a 12S rRNA and about 30 distinct proteins.

Its subcellular location is the mitochondrion. This is Small ribosomal subunit protein uS12m (MRPS12) from Pongo abelii (Sumatran orangutan).